Reading from the N-terminus, the 288-residue chain is MSDLRQNFERDGFVVIENVFNDQEIEEIKGAIGKIVEDMNLAEHPKSVFSTYDEDKHAADSYFLNSSDKIRFFFEEGAVDKDGELTVPKDKALNKIGHGLHLLDPTFKKMTFNSKIQKIFQGIGYQEPEVVQSMYIFKQPKIGGAVTDHVDSTFLRVNPIDHLTGVWIAIDEASVENGCLSFIPGSHKDTSTSDYRFVRTHDTTGGPLLKFIGTRPTYDQSKFQHVPISKGSLILIHGLVVHKSEANTSDKSRHAYTIHVMEKQNTEWSKDNWLQETEQYKFPNLYKQ.

Residues Lys95, Met134, 149–151, and Trp167 each bind 2-oxoglutarate; that span reads HVD. Residues His149 and Asp151 each coordinate Fe cation. Residue His242 participates in Fe cation binding. Ser244 and Arg253 together coordinate 2-oxoglutarate.

Belongs to the PhyH family. PHYHD1 subfamily. Requires Fe cation as cofactor.

Its function is as follows. Has alpha-ketoglutarate-dependent dioxygenase activity. Does not show detectable activity towards fatty acid CoA thioesters. Is not expected to be active with phytanoyl CoA. This chain is Phytanoyl-CoA dioxygenase domain-containing protein 1 homolog, found in Caenorhabditis briggsae.